The following is a 119-amino-acid chain: Small ribosomal subunit protein bS16 (119 aa).

Belongs to the bacterial ribosomal protein bS16 family.

The polypeptide is Small ribosomal subunit protein bS16 (Chlamydia abortus (strain DSM 27085 / S26/3) (Chlamydophila abortus)).